Here is a 243-residue protein sequence, read N- to C-terminus: Probable transcriptional regulatory protein BH0025 (243 aa).

The protein belongs to the TACO1 family.

The protein resides in the cytoplasm. This chain is Probable transcriptional regulatory protein BH0025, found in Borrelia hermsii (strain HS1 / DAH).